The chain runs to 49 residues: Isoflavone reductase homolog 2 (49 aa).

5-11 contributes to the NADP(+) binding site; that stretch reads GGTGYIG.

It belongs to the NmrA-type oxidoreductase family. Isoflavone reductase subfamily.

The protein resides in the cytoplasm. In Pseudotsuga menziesii (Douglas-fir), this protein is Isoflavone reductase homolog 2.